The following is a 499-amino-acid chain: Serine/threonine-protein phosphatase 5 (499 aa).

The interval 1–23 is disordered; it reads MAMAEGERTECAEPPRDEPPAEG. Residue Ala2 is modified to N-acetylalanine. TPR repeat units follow at residues 28-61, 62-95, and 96-129; these read AEEL…NPSN, AIYY…DKKY, and IKGY…KPND. A catalytic region spans residues 200-499; it reads DQKKLHRKCA…ANTLLQLGMM (300 aa). Residues Asp242, His244, and Asp271 each contribute to the Mg(2+) site. His244 contributes to the substrate binding site. Residues Arg275 and 303-304 each bind substrate; that span reads NH. Position 303 (Asn303) interacts with Mg(2+). The active-site Proton donor/acceptor is the His304. A Mg(2+)-binding site is contributed by His352. Substrate is bound by residues Arg400 and His427. His427 serves as a coordination point for Mg(2+). The required for autoinhibition stretch occupies residues 495–499; sequence QLGMM.

It belongs to the PPP phosphatase family. PP-5 (PP-T) subfamily. Probably forms a complex composed of chaperones HSP90 and HSP70, co-chaperones STIP1/HOP, CDC37, PPP5C, PTGES3/p23, TSC1 and client protein TSC2. Probably forms a complex composed of chaperones HSP90 and HSP70, co-chaperones CDC37, PPP5C, TSC1 and client protein TSC2, CDK4, AKT, RAF1 and NR3C1; this complex does not contain co-chaperones STIP1/HOP and PTGES3/p23. Part of a complex with HSP90/HSP90AA1 and steroid receptors. Interacts (via TPR repeats) with HSP90AA1 (via TPR repeat-binding motif) or HSPA1A/HSPA1B; the interaction is direct and activates the phosphatase activity. Dissociates from HSPA1A/HSPA1B and HSP90AA1 in response to arachidonic acid. Interacts with CPNE1 (via VWFA domain). Interacts with CDC16, CDC27. Interacts with KLHDC10 (via the 6 Kelch repeats); inhibits the phosphatase activity on MAP3K5. Interacts with ATM and ATR; both interactions are induced by DNA damage and enhance ATM and ATR kinase activity. Interacts with RAD17; reduced by DNA damage. Interacts with nuclear receptors such as NR3C1/GCR and PPARG (activated by agonist); regulates their transactivation activities. Interacts (via TPR repeats) with S100 proteins S100A1, S100A2, S100A6, S100B and S100P; the interactions are calcium-dependent, strongly activate PPP5C phosphatase activity and compete with HSP90AA1 and MAP3K5 interactions. Interacts with SMAD2 and SMAD3 but not with SMAD1; decreases SMAD3 phosphorylation and protein levels. Interacts (via TPR repeats) with CRY1 and CRY2; the interaction with CRY2 down-regulates the phosphatase activity on CSNK1E. Interacts (via TPR repeats) with the active form of RAC1, GNA12 or GNA13; these interactions activate the phosphatase activity and translocate PPP5C to the cell membrane. Interacts with FLCN. Mg(2+) is required as a cofactor. It depends on Mn(2+) as a cofactor. Activated by at least two different proteolytic cleavages producing a 56 kDa and a 50 kDa form. Predominantly found in brain and, in lower levels, in testis, but was nearly undetectable in spleen, lung, skeletal muscle, kidney and liver.

It is found in the nucleus. The protein localises to the cytoplasm. The protein resides in the cell membrane. It catalyses the reaction O-phospho-L-seryl-[protein] + H2O = L-seryl-[protein] + phosphate. It carries out the reaction O-phospho-L-threonyl-[protein] + H2O = L-threonyl-[protein] + phosphate. Its activity is regulated as follows. Autoinhibited. In the autoinhibited state, the TPR domain interacts with the catalytic region and prevents substrate access to the catalytic pocket. Allosterically activated by various polyunsaturated fatty acids, free long-chain fatty-acids and long-chain fatty acyl-CoA esters, arachidonic acid being the most effective activator. HSP90A and probably RAC1, GNA12 and GNA13 can also release the autoinhibition by the TPR repeat. Activation by RAC1, GNA12 and GNA13 is synergistic with the one produced by fatty acids binding. Inhibited by okadaic acid. Functionally, serine/threonine-protein phosphatase that dephosphorylates a myriad of proteins involved in different signaling pathways including the kinases CSNK1E, ASK1/MAP3K5, PRKDC and RAF1, the nuclear receptors NR3C1, PPARG, ESR1 and ESR2, SMAD proteins and TAU/MAPT. Implicated in wide ranging cellular processes, including apoptosis, differentiation, DNA damage response, cell survival, regulation of ion channels or circadian rhythms, in response to steroid and thyroid hormones, calcium, fatty acids, TGF-beta as well as oxidative and genotoxic stresses. Participates in the control of DNA damage response mechanisms such as checkpoint activation and DNA damage repair through, for instance, the regulation ATM/ATR-signaling and dephosphorylation of PRKDC and TP53BP1. Inhibits ASK1/MAP3K5-mediated apoptosis induced by oxidative stress. Plays a positive role in adipogenesis, mainly through the dephosphorylation and activation of PPARG transactivation function. Also dephosphorylates and inhibits the anti-adipogenic effect of NR3C1. Regulates the circadian rhythms, through the dephosphorylation and activation of CSNK1E. May modulate TGF-beta signaling pathway by the regulation of SMAD3 phosphorylation and protein expression levels. Dephosphorylates and may play a role in the regulation of TAU/MAPT. Through their dephosphorylation, may play a role in the regulation of ions channels such as KCNH2. Dephosphorylate FNIP1, disrupting interaction with HSP90AA1/Hsp90. The chain is Serine/threonine-protein phosphatase 5 (Ppp5c) from Rattus norvegicus (Rat).